The primary structure comprises 327 residues: Ribosomal RNA small subunit methyltransferase H (327 aa).

S-adenosyl-L-methionine is bound by residues 41–43 (GGH), Asp-60, Tyr-87, Asp-108, and Gln-115. Positions 292–327 (AERADEQETLENPRAASARLRAVERLRETTTPGSAR) are disordered.

This sequence belongs to the methyltransferase superfamily. RsmH family.

The protein localises to the cytoplasm. It catalyses the reaction cytidine(1402) in 16S rRNA + S-adenosyl-L-methionine = N(4)-methylcytidine(1402) in 16S rRNA + S-adenosyl-L-homocysteine + H(+). In terms of biological role, specifically methylates the N4 position of cytidine in position 1402 (C1402) of 16S rRNA. The polypeptide is Ribosomal RNA small subunit methyltransferase H (Kocuria rhizophila (strain ATCC 9341 / DSM 348 / NBRC 103217 / DC2201)).